The chain runs to 898 residues: Protein translocase subunit SecA (898 aa).

Residues glutamine 87, 105–109, and aspartate 512 each bind ATP; that span reads GEGKT. The span at 855-865 shows a compositional bias: polar residues; the sequence is MQYQNNEGTSS. Residues 855-898 are disordered; the sequence is MQYQNNEGTSSLHEKSEHKIGRNESCPCGSGKKYKHCHGSKAKY. A compositionally biased stretch (basic and acidic residues) spans 866-876; the sequence is LHEKSEHKIGR. Zn(2+) is bound by residues cysteine 880, cysteine 882, cysteine 891, and histidine 892. Positions 886-898 are enriched in basic residues; it reads KKYKHCHGSKAKY.

Belongs to the SecA family. Monomer and homodimer. Part of the essential Sec protein translocation apparatus which comprises SecA, SecYEG and auxiliary proteins SecDF-YajC and YidC. Requires Zn(2+) as cofactor.

It localises to the cell inner membrane. It is found in the cytoplasm. It catalyses the reaction ATP + H2O + cellular proteinSide 1 = ADP + phosphate + cellular proteinSide 2.. Part of the Sec protein translocase complex. Interacts with the SecYEG preprotein conducting channel. Has a central role in coupling the hydrolysis of ATP to the transfer of proteins into and across the cell membrane, serving both as a receptor for the preprotein-SecB complex and as an ATP-driven molecular motor driving the stepwise translocation of polypeptide chains across the membrane. The protein is Protein translocase subunit SecA of Histophilus somni (strain 2336) (Haemophilus somnus).